The sequence spans 156 residues: MYGEKAKKVLLHIIRSGGIVAEETLGKDIGMKSNEARKILQQLADEAILRYKTGRVGDKTLHLWILNIDQIEGILIARLKKTREKLLIRLNYEKNNTFLKCPLCGRRYTFDEAFENDFLCPYDGEQLIEYDNSEEIRILEEKIKEITDELSRIGAA.

The HTH TFE/IIEalpha-type domain maps to 1-72 (MYGEKAKKVL…LWILNIDQIE (72 aa)).

It belongs to the TFE family. Monomer. Interaction with RNA polymerase subunits RpoF and RpoE is necessary for Tfe stimulatory transcription activity. Able to interact with Tbp and RNA polymerase in the absence of DNA promoter. Interacts both with the preinitiation and elongation complexes.

Its function is as follows. Transcription factor that plays a role in the activation of archaeal genes transcribed by RNA polymerase. Facilitates transcription initiation by enhancing TATA-box recognition by TATA-box-binding protein (Tbp), and transcription factor B (Tfb) and RNA polymerase recruitment. Not absolutely required for transcription in vitro, but particularly important in cases where Tbp or Tfb function is not optimal. It dynamically alters the nucleic acid-binding properties of RNA polymerases by stabilizing the initiation complex and destabilizing elongation complexes. Seems to translocate with the RNA polymerase following initiation and acts by binding to the non template strand of the transcription bubble in elongation complexes. The chain is Transcription factor E from Staphylothermus marinus (strain ATCC 43588 / DSM 3639 / JCM 9404 / F1).